Reading from the N-terminus, the 163-residue chain is Protein MATERNALLY EXPRESSED GENE 5 (163 aa).

An RRM domain is found at 38–117 (STLYIEGLPA…DDVNVSAPAE (80 aa)). Cystine bridges form between cysteine 140-cysteine 162 and cysteine 143-cysteine 151.

Belongs to the MEG family. As to expression, ubiquitous.

The chain is Protein MATERNALLY EXPRESSED GENE 5 (MEG5) from Zea mays (Maize).